The chain runs to 451 residues: Chromosomal replication initiator protein DnaA (451 aa).

Residues 1-93 (MENIDDLWNK…HNQEEEALPE (93 aa)) are domain I, interacts with DnaA modulators. The disordered stretch occupies residues 88–108 (EEALPEQTPQTPPEKDVAGQS). The domain II stretch occupies residues 94-113 (QTPQTPPEKDVAGQSTLSQT). Positions 114 to 330 (MLNDKYTFNT…GALIRVVAYS (217 aa)) are domain III, AAA+ region. Gly158, Gly160, Lys161, and Thr162 together coordinate ATP. A domain IV, binds dsDNA region spans residues 331–451 (SLINQDMNAD…VQAITEQLRQ (121 aa)).

The protein belongs to the DnaA family. Oligomerizes as a right-handed, spiral filament on DNA at oriC.

It localises to the cytoplasm. Its function is as follows. Plays an essential role in the initiation and regulation of chromosomal replication. ATP-DnaA binds to the origin of replication (oriC) to initiate formation of the DNA replication initiation complex once per cell cycle. Binds the DnaA box (a 9 base pair repeat at the origin) and separates the double-stranded (ds)DNA. Forms a right-handed helical filament on oriC DNA; dsDNA binds to the exterior of the filament while single-stranded (ss)DNA is stabiized in the filament's interior. The ATP-DnaA-oriC complex binds and stabilizes one strand of the AT-rich DNA unwinding element (DUE), permitting loading of DNA polymerase. After initiation quickly degrades to an ADP-DnaA complex that is not apt for DNA replication. Binds acidic phospholipids. The chain is Chromosomal replication initiator protein DnaA from Shouchella clausii (strain KSM-K16) (Alkalihalobacillus clausii).